Here is a 1448-residue protein sequence, read N- to C-terminus: Sister chromatid cohesion protein PDS5 homolog B-A (1448 aa).

One copy of the HEAT repeat lies at 383-419 (LLVNDQLLNFVRERTLDKRWRVRKEAMMGLAQIYKKY). Over residues 1141–1155 (AGKQMLSKSSRMETV) the composition is skewed to polar residues. The disordered stretch occupies residues 1141–1448 (AGKQMLSKSS…TGRLRSAKKR (308 aa)). The segment covering 1156–1168 (SNASSGSNPSSPG) has biased composition (low complexity). The span at 1177–1186 (MELDQSENED) shows a compositional bias: acidic residues. Composition is skewed to basic and acidic residues over residues 1196-1214 (KKSD…LEKP), 1233-1243 (ELSKPAQEPKS), and 1264-1273 (WQEKRLKEDL). Positions 1285–1294 (KKGRRGRPPK) are enriched in basic residues. A DNA-binding region (a.T hook 1) is located at residues 1286-1298 (KGRRGRPPKSAKM). The segment covering 1324–1341 (PTDEDDHLEISEEQDFEN) has biased composition (acidic residues). Positions 1346–1356 (RKGRGSSRRTP) are enriched in basic residues. DNA-binding regions (a.T hook) lie at residues 1374–1386 (QKRR…TPTV) and 1390–1402 (KSHV…VVSK). Basic residues predominate over residues 1389-1399 (KKSHVGRPRKV).

Belongs to the PDS5 family. Interacts with the cohesin complex. In terms of processing, phosphorylated in mitotic cells.

Its subcellular location is the nucleus. Its function is as follows. Plays a role in androgen-induced proliferative arrest. Required for maintenance of sister chromatid cohesion during mitosis. The polypeptide is Sister chromatid cohesion protein PDS5 homolog B-A (pds5b-a) (Xenopus laevis (African clawed frog)).